Reading from the N-terminus, the 119-residue chain is MARIAGVNLPSNKHVNIALTAIYGIGNSTARKICTDLDIPPFIKLKELTDGKLEELRNSIAKLLVEGDLRREVSMNIKRLIDLGSYRGLRHRRGLPVRGQRTKTNARTRKGPRKAIRAR.

The disordered stretch occupies residues 92-119 (RRGLPVRGQRTKTNARTRKGPRKAIRAR).

It belongs to the universal ribosomal protein uS13 family. As to quaternary structure, part of the 30S ribosomal subunit. Forms a loose heterodimer with protein S19. Forms two bridges to the 50S subunit in the 70S ribosome.

In terms of biological role, located at the top of the head of the 30S subunit, it contacts several helices of the 16S rRNA. In the 70S ribosome it contacts the 23S rRNA (bridge B1a) and protein L5 of the 50S subunit (bridge B1b), connecting the 2 subunits; these bridges are implicated in subunit movement. Contacts the tRNAs in the A and P-sites. The protein is Small ribosomal subunit protein uS13 of Nitrosomonas eutropha (strain DSM 101675 / C91 / Nm57).